A 291-amino-acid polypeptide reads, in one-letter code: MKLDLGSPPESGDLYNAFINALIIAGAGNGTIKLYSTAVRDFLDFINKDPRKVTSEDLNRWISSLLNREGKVKGDEVEKKRAKSVTIRYYIIAVRRFLKWINVSVRPPIPKVRRKEVKALDEIQIQKVLNACKRTKDKLIIRLLLDTGLRANELLSVLVKDIDLENNMIRVRNTKNGEERIVFFTDETKLLLRKYIKGKKAEDKLFDLKYDTLYRKLKRLGKKVGIDLRPHILRHTFATLSLKRGINVITLQKLLGHKDIKTTQIYTHLVLDDLRNEYLKAMSSSSSKTPP.

One can recognise a Core-binding (CB) domain in the interval 9–102; sequence PESGDLYNAF…AVRRFLKWIN (94 aa). A Tyr recombinase domain is found at 115-279; the sequence is KEVKALDEIQ…VLDDLRNEYL (165 aa). Catalysis depends on residues Arg-150, Lys-175, His-231, Arg-234, and His-257. The active-site O-(3'-phospho-DNA)-tyrosine intermediate is Tyr-266.

It belongs to the 'phage' integrase family. XerA subfamily.

Its subcellular location is the cytoplasm. Its function is as follows. Site-specific tyrosine recombinase, which acts by catalyzing the cutting and rejoining of the recombining DNA molecules. Probably involved in the resolution of chromosome dimers. Binds to the dif site. This is Tyrosine recombinase XerA from Saccharolobus solfataricus (strain ATCC 35092 / DSM 1617 / JCM 11322 / P2) (Sulfolobus solfataricus).